A 149-amino-acid polypeptide reads, in one-letter code: Large ribosomal subunit protein bL9 (149 aa).

The protein belongs to the bacterial ribosomal protein bL9 family.

Functionally, binds to the 23S rRNA. The sequence is that of Large ribosomal subunit protein bL9 from Klebsiella pneumoniae subsp. pneumoniae (strain ATCC 700721 / MGH 78578).